A 151-amino-acid chain; its full sequence is Putative phosphatidylglycerol/phosphatidylinositol transfer protein 1 (151 aa).

An N-terminal signal peptide occupies residues 1-26; it reads MKHSKNQIVYITFFIIILIVVKPIES.

The protein belongs to the NPC2 family. As to quaternary structure, monomer.

Its function is as follows. Catalyzes the intermembrane transfer of phosphatidylglycerol and phosphatidylinositol. This Dictyostelium discoideum (Social amoeba) protein is Putative phosphatidylglycerol/phosphatidylinositol transfer protein 1.